A 530-amino-acid chain; its full sequence is Ataxin-10 homolog (530 aa).

Belongs to the ataxin-10 family.

The protein resides in the cytoplasm. Functionally, may play a role in the regulation of cytokinesis. This Candida glabrata (strain ATCC 2001 / BCRC 20586 / JCM 3761 / NBRC 0622 / NRRL Y-65 / CBS 138) (Yeast) protein is Ataxin-10 homolog (CTR86).